The chain runs to 202 residues: Holliday junction resolvase RecU (202 aa).

The Mg(2+) site is built by T85, D87, E100, and Q119.

It belongs to the RecU family. Mg(2+) is required as a cofactor.

The protein resides in the cytoplasm. The enzyme catalyses Endonucleolytic cleavage at a junction such as a reciprocal single-stranded crossover between two homologous DNA duplexes (Holliday junction).. Its function is as follows. Endonuclease that resolves Holliday junction intermediates in genetic recombination. Cleaves mobile four-strand junctions by introducing symmetrical nicks in paired strands. Promotes annealing of linear ssDNA with homologous dsDNA. Required for DNA repair, homologous recombination and chromosome segregation. The polypeptide is Holliday junction resolvase RecU (Streptococcus equi subsp. zooepidemicus (strain H70)).